A 466-amino-acid polypeptide reads, in one-letter code: Argininosuccinate lyase (466 aa).

This sequence belongs to the lyase 1 family. Argininosuccinate lyase subfamily.

It localises to the cytoplasm. The catalysed reaction is 2-(N(omega)-L-arginino)succinate = fumarate + L-arginine. It functions in the pathway amino-acid biosynthesis; L-arginine biosynthesis; L-arginine from L-ornithine and carbamoyl phosphate: step 3/3. In Brucella abortus (strain S19), this protein is Argininosuccinate lyase.